Consider the following 546-residue polypeptide: 2-isopropylmalate synthase (546 aa).

Residues 8–271 (ILIFDTTLRD…NSFFKRNPDS (264 aa)) form the Pyruvate carboxyltransferase domain. Mn(2+) is bound by residues Asp-17, His-208, His-210, and Asn-244. Positions 408 to 546 (QLSLVQVSCG…TNTFLSNNAN (139 aa)) are regulatory domain.

It belongs to the alpha-IPM synthase/homocitrate synthase family. LeuA type 1 subfamily. In terms of assembly, homodimer. It depends on Mn(2+) as a cofactor.

It localises to the cytoplasm. The enzyme catalyses 3-methyl-2-oxobutanoate + acetyl-CoA + H2O = (2S)-2-isopropylmalate + CoA + H(+). Its pathway is amino-acid biosynthesis; L-leucine biosynthesis; L-leucine from 3-methyl-2-oxobutanoate: step 1/4. Functionally, catalyzes the condensation of the acetyl group of acetyl-CoA with 3-methyl-2-oxobutanoate (2-ketoisovalerate) to form 3-carboxy-3-hydroxy-4-methylpentanoate (2-isopropylmalate). The protein is 2-isopropylmalate synthase of Prochlorococcus marinus (strain AS9601).